Reading from the N-terminus, the 597-residue chain is Aspartate--tRNA(Asp/Asn) ligase (597 aa).

Glutamate 175 provides a ligand contact to L-aspartate. The aspartate stretch occupies residues 199–202 (QQYK). L-aspartate-binding residues include arginine 221 and histidine 454. Position 221–223 (221–223 (RDE)) interacts with ATP. ATP is bound at residue glutamate 488. Arginine 495 lines the L-aspartate pocket. 540–543 (GVDR) contributes to the ATP binding site.

It belongs to the class-II aminoacyl-tRNA synthetase family. Type 1 subfamily. Homodimer.

The protein localises to the cytoplasm. The enzyme catalyses tRNA(Asx) + L-aspartate + ATP = L-aspartyl-tRNA(Asx) + AMP + diphosphate. Aspartyl-tRNA synthetase with relaxed tRNA specificity since it is able to aspartylate not only its cognate tRNA(Asp) but also tRNA(Asn). Reaction proceeds in two steps: L-aspartate is first activated by ATP to form Asp-AMP and then transferred to the acceptor end of tRNA(Asp/Asn). This is Aspartate--tRNA(Asp/Asn) ligase from Bartonella quintana (strain Toulouse) (Rochalimaea quintana).